A 942-amino-acid chain; its full sequence is VPS35 endosomal protein sorting factor-like (942 aa).

The protein belongs to the VPS35L family. Component of the heterotrimeric retriever complex.

Its subcellular location is the endosome. Functionally, acts as a component of the retriever complex. The retriever complex is a heterotrimeric complex related to retromer cargo-selective complex (CSC) and essential for retromer-independent retrieval and recycling of numerous cargos. The protein is VPS35 endosomal protein sorting factor-like of Drosophila melanogaster (Fruit fly).